The sequence spans 90 residues: Probable Fe(2+)-trafficking protein (90 aa).

It belongs to the Fe(2+)-trafficking protein family. Monomer.

Functionally, could be a mediator in iron transactions between iron acquisition and iron-requiring processes, such as synthesis and/or repair of Fe-S clusters in biosynthetic enzymes. The sequence is that of Probable Fe(2+)-trafficking protein from Serratia proteamaculans (strain 568).